We begin with the raw amino-acid sequence, 712 residues long: TGF-beta-activated kinase 1 and MAP3K7-binding protein 3 (712 aa).

Ala-2 is modified (N-acetylalanine). A CUE domain is found at Leu-8 to Ser-51. A phosphoserine mark is found at Ser-60, Ser-101, and Ser-103. Disordered stretches follow at residues Phe-141 to Arg-189, Pro-227 to Ser-345, Thr-369 to Val-447, and Glu-475 to Ser-509. The segment covering Met-163–Gln-173 has biased composition (polar residues). Composition is skewed to low complexity over residues Arg-233–Pro-249 and Tyr-269–Ser-290. The span at Pro-322–Pro-332 shows a compositional bias: pro residues. 2 stretches are compositionally biased toward polar residues: residues Gly-336–Ser-345 and Glu-371–Thr-404. At Ser-385 the chain carries Phosphoserine. Residue Thr-404 is modified to Phosphothreonine. The span at Pro-405 to Gln-417 shows a compositional bias: low complexity. 2 positions are modified to phosphoserine: Ser-409 and Ser-492. The residue at position 506 (Ser-506) is a Phosphoserine; by MAPKAPK2 and MAPKAPK3. A coiled-coil region spans residues Ala-517 to Leu-559. The segment at Met-609 to Thr-636 is disordered. Residues Ser-627 to Thr-636 are compositionally biased toward basic and acidic residues. Residue Lys-649 forms a Glycyl lysine isopeptide (Lys-Gly) (interchain with G-Cter in ubiquitin) linkage. Basic and acidic residues predominate over residues Gln-658–Thr-667. A disordered region spans residues Gln-658–Tyr-682. The RanBP2-type zinc finger occupies Tyr-682–Thr-712. Position 692 is a (Microbial infection) S-methylcysteine (Cys-692).

In terms of assembly, interacts with TAB1, TAB2, MAP3K7, TRAF2 and TRAF6. The minimal TAB3-containing complex (TAB1-MAP3K7-TAB3) appears not to contain TAB2. However, it seems sensible to consider that TAB2 may also join this complex and may act in a cooperative manner with TAB3. Interacts with DYNC2I2 (via the WD domains). Interacts with RBCK1. Binds 'Lys-63'-linked polyubiquitin chains. Interacts with TRIM5. Interacts with TRIM38 (via B30.2/SPRY domain), leading to its translocation to lysosomes and degradation. Interacts with ASB1. (Microbial infection) Interacts with M.tuberculosis PtpA, which blocks the NF-kappa-B signaling pathway. Post-translationally, ubiquitinated; following IL1 stimulation or TRAF6 overexpression. Ubiquitinated by AMFR via 'Lys-27'-linked polyubiquitination; leading to TAK1/MAP3K7 activation. In terms of processing, degraded in a lysosome-dependent manner following interaction with TRIM38. Phosphorylated at Ser-506 by MAPKAPK2 and MAPKAPK3 following IL1 treatment. Post-translationally, (Microbial infection) Methylated at Cys-692 by enteropathogenic E.coli protein NleE or S.flexneri protein OspZ: methylation disrupts zinc-binding and ability to bind 'Lys-63'-linked ubiquitin, leading to NF-kappa-B inactivation. As to expression, widely expressed. Constitutively overexpressed in certain tumor tissues. Major transcript. In terms of tissue distribution, minor transcript.

Functionally, adapter required to activate the JNK and NF-kappa-B signaling pathways through the specific recognition of 'Lys-63'-linked polyubiquitin chains by its RanBP2-type zinc finger (NZF). Acts as an adapter linking MAP3K7/TAK1 and TRAF6 to 'Lys-63'-linked polyubiquitin chains. The RanBP2-type zinc finger (NZF) specifically recognizes Lys-63'-linked polyubiquitin chains unanchored or anchored to the substrate proteins such as RIPK1/RIP1 and RIPK2: this acts as a scaffold to organize a large signaling complex to promote autophosphorylation of MAP3K7/TAK1, and subsequent activation of I-kappa-B-kinase (IKK) core complex by MAP3K7/TAK1. Its function is as follows. May be an oncogenic factor. This Homo sapiens (Human) protein is TGF-beta-activated kinase 1 and MAP3K7-binding protein 3.